An 824-amino-acid polypeptide reads, in one-letter code: E3 ubiquitin-protein ligase TRIM71 (824 aa).

The RING-type zinc finger occupies 23-93 (CPLCKELCGC…PLKLRCPTCD (71 aa)). The interval 37–56 (SSNSSTSSSSSQTSNSSSTS) is disordered. A B box-type 1; atypical zinc finger spans residues 147 to 194 (LSDPQCSSCDEGNPATSHCLDCQEYLCDNCVRAHQRVRLTKDHFIEGL). Zn(2+) contacts are provided by cysteine 152, cysteine 155, cysteine 176, histidine 180, cysteine 234, histidine 237, cysteine 257, and histidine 262. The segment at 229 to 270 (ERMDFCQHHDDAVLRFFCDSCTVPICRECSLGRHAGHSFTYL) adopts a B box-type 2 zinc-finger fold. The stretch at 293–321 (QAIQLSIEKAQAIAEQVELKAKVVQSEVK) forms a coiled coil. The Filamin repeat unit spans residues 435 to 536 (SSGAFATASK…IEGSPFKVMV (102 aa)). NHL repeat units follow at residues 549–592 (MASF…FKPC), 596–639 (HHKF…FTFD), 643–686 (LLKF…FGPD), 690–733 (LNKY…IRPD), 737–780 (ARFL…FEPN), and 784–824 (LCKF…ILMF).

Belongs to the TRIM/RBCC family.

The protein localises to the cytoplasm. Its subcellular location is the P-body. It carries out the reaction S-ubiquitinyl-[E2 ubiquitin-conjugating enzyme]-L-cysteine + [acceptor protein]-L-lysine = [E2 ubiquitin-conjugating enzyme]-L-cysteine + N(6)-ubiquitinyl-[acceptor protein]-L-lysine.. Its pathway is protein modification; protein ubiquitination. E3 ubiquitin-protein ligase that cooperates with the microRNAs (miRNAs) machinery and promotes embryonic stem cells proliferation and maintenance. Binds to miRNAs and participates in post-transcriptional repression of transcripts. Required to maintain proliferation and prevent premature differentiation of neural progenitor cells during early neural development. The sequence is that of E3 ubiquitin-protein ligase TRIM71 (trim71) from Danio rerio (Zebrafish).